A 627-amino-acid polypeptide reads, in one-letter code: MAAAELTAPAQGIVTFEDVAVYFSWKEWGLLDEAQKCLYHDVMLENLTLTTSLGGSGAGDEEAPYQQSTSPQRVSQVRIPKALPSPQKTNPCEICGPVLRQILHLVEHQGTHHGQKLYTDGACRKQLQFTAYLHQHQKQHVGQKHFRSNGGRDMFLSSCTFEVSGKPFTCKEVGKDFLVRSRFLQQQAAHTRKKSNRTKSAVAFHSVKNHYNWGECVKAFSYKHVRVQHQGDLIRERSYMCSECGKSFSTSCSLSDHLRVHTSEKPYTCGECGKSYRQSSSLITHRRIHTGVRPHQCDECGKLFNRKYDLLIHQRVHTGERPYKCSECGKSFSHSSSLITHQRIHTGMRPYECSECGKSFIHSSSLITHQRVHTGTRPYMCSECGKSFSQSCHLIKHRRLHIGEGPYECSECGKLFTYRSRFFQHQRVHTGVRSHECHECGKLFSRKFDLIVHERVHTGERPYECSECGKSFTCKSYLISHWKVHTGARPYECGECGKSFTHSSTLLQHQRVHTGERPYECNECGKFFSQSSSLIRHRRSHTGERPYECSECWKSFSNHSSLVKHRRVHTGERPYECSECGKSFSQSSNLTNHQRIHSGERPYECSDCGKFFTFNSNLLKHQNVHKG.

The region spanning 14 to 96 is the KRAB domain; sequence VTFEDVAVYF…QKTNPCEICG (83 aa). A disordered region spans residues 55–76; that stretch reads GSGAGDEEAPYQQSTSPQRVSQ. Residues 65–75 show a composition bias toward polar residues; it reads YQQSTSPQRVS. 15 C2H2-type zinc fingers span residues 90-112, 239-261, 267-289, 295-317, 323-345, 351-373, 379-401, 407-429, 435-457, 463-485, 491-513, 519-541, 547-569, 575-597, and 603-625; these read NPCE…QGTH, YMCS…LRVH, YTCG…RRIH, HQCD…QRVH, YKCS…QRIH, YECS…QRVH, YMCS…RRLH, HECH…ERVH, YECS…WKVH, YECG…QRVH, YECN…RRSH, YECS…RRVH, YECS…QRIH, and YECS…QNVH.

Belongs to the krueppel C2H2-type zinc-finger protein family. In terms of assembly, interacts with TRIM28.

It is found in the nucleus. Its function is as follows. Transcriptional repressor that plays a role in cell proliferation. Requires TRIM28 for its activity. The chain is Zinc finger protein 256 (ZNF256) from Homo sapiens (Human).